We begin with the raw amino-acid sequence, 123 residues long: uncharacterized protein (123 aa).

2 helical membrane-spanning segments follow: residues 55–77 (LLIH…STIL) and 92–114 (FFIN…TIVY).

The protein localises to the cell membrane. This is an uncharacterized protein from Pasteurella multocida (strain Pm70).